Reading from the N-terminus, the 305-residue chain is tRNA dimethylallyltransferase 2 (305 aa).

14 to 21 serves as a coordination point for ATP; it reads GPTASGKT. Residue 16–21 coordinates substrate; sequence TASGKT. The interaction with substrate tRNA stretch occupies residues 39 to 42; it reads DSRQ.

It belongs to the IPP transferase family. Monomer. Mg(2+) serves as cofactor.

The catalysed reaction is adenosine(37) in tRNA + dimethylallyl diphosphate = N(6)-dimethylallyladenosine(37) in tRNA + diphosphate. Functionally, catalyzes the transfer of a dimethylallyl group onto the adenine at position 37 in tRNAs that read codons beginning with uridine, leading to the formation of N6-(dimethylallyl)adenosine (i(6)A). The protein is tRNA dimethylallyltransferase 2 of Trichlorobacter lovleyi (strain ATCC BAA-1151 / DSM 17278 / SZ) (Geobacter lovleyi).